The sequence spans 150 residues: Deoxyuridine 5'-triphosphate nucleotidohydrolase (150 aa).

Substrate-binding positions include 69–71 (RSG), asparagine 82, 86–88 (LID), and methionine 96.

Belongs to the dUTPase family. It depends on Mg(2+) as a cofactor.

The catalysed reaction is dUTP + H2O = dUMP + diphosphate + H(+). The protein operates within pyrimidine metabolism; dUMP biosynthesis; dUMP from dCTP (dUTP route): step 2/2. Its function is as follows. This enzyme is involved in nucleotide metabolism: it produces dUMP, the immediate precursor of thymidine nucleotides and it decreases the intracellular concentration of dUTP so that uracil cannot be incorporated into DNA. This chain is Deoxyuridine 5'-triphosphate nucleotidohydrolase, found in Leptothrix cholodnii (strain ATCC 51168 / LMG 8142 / SP-6) (Leptothrix discophora (strain SP-6)).